A 573-amino-acid polypeptide reads, in one-letter code: MGEGEENGNEADSNERSLALSPTWSVAIVLTVFVVVSLIVERSIYRLSTWLRKTKRKPMFAALEKMKEELMLLGFISLLLTATSSTIANICVPSSFYNDRFLPCTRSEIQEELESGSTVKRNLLTKSLFFNIFRRRLDVIKRTTCSEGHEPFVSYEGLEQLHRFIFIMAVTHVTYSCLTMLLAIVKIHSWRIWEDVARLDRHDCLTAVAREKIFRRQTTFVQYHTSAPLAKNRILIWVTCFFRQFGRSVDRSDYLTLRKGFIVNHHLTLKYDFHSYMIRSMEEEFQRIVGVSGPLWGFVVAFMLFNIKGSNLYFWIAIIPVTLVLLVGAKLQHVIATLALENAGLTEYPSGVKLRPRDELFWFNKPELLLSLIHFILFQNSFELASFFWFWWQFGYSSCFLKNHYLVYFRLLLGFAGQFLCSYSTLPLYALVTQMGTNYKAALIPQRIRETIRGWGKATRRKRRHGLYGDDSTVRTETSTIASLEEYDHQVLDVTETSFEQQRKQQEQGTTELELQPIQPRNDCVPNDTSSRVGTPLLRPWLSISSPTTTIELRSEPMETLSRSSSLPSEKRV.

Topologically, residues 1–19 (MGEGEENGNEADSNERSLA) are extracellular. The chain crosses the membrane as a helical span at residues 20 to 40 (LSPTWSVAIVLTVFVVVSLIV). Residues 41–69 (ERSIYRLSTWLRKTKRKPMFAALEKMKEE) lie on the Cytoplasmic side of the membrane. The helical transmembrane segment at 70 to 90 (LMLLGFISLLLTATSSTIANI) threads the bilayer. Topologically, residues 91–163 (CVPSSFYNDR…SYEGLEQLHR (73 aa)) are extracellular. The chain crosses the membrane as a helical span at residues 164–184 (FIFIMAVTHVTYSCLTMLLAI). The Cytoplasmic portion of the chain corresponds to 185 to 287 (VKIHSWRIWE…IRSMEEEFQR (103 aa)). 2 helical membrane-spanning segments follow: residues 288–308 (IVGV…FNIK) and 309–329 (GSNL…LVGA). The Cytoplasmic segment spans residues 330 to 371 (KLQHVIATLALENAGLTEYPSGVKLRPRDELFWFNKPELLLS). A helical transmembrane segment spans residues 372–392 (LIHFILFQNSFELASFFWFWW). Topologically, residues 393–411 (QFGYSSCFLKNHYLVYFRL) are extracellular. Residues 412–432 (LLGFAGQFLCSYSTLPLYALV) traverse the membrane as a helical segment. Residues 433-573 (TQMGTNYKAA…SSSLPSEKRV (141 aa)) lie on the Cytoplasmic side of the membrane. Residues 446 to 467 (QRIRETIRGWGKATRRKRRHGL) are calmodulin-binding. Disordered regions lie at residues 500-532 (EQQR…TSSR) and 554-573 (RSEP…EKRV). A compositionally biased stretch (low complexity) spans 507–516 (EQGTTELELQ). Residues 561 to 573 (LSRSSSLPSEKRV) are compositionally biased toward polar residues.

The protein belongs to the MLO family.

It localises to the membrane. Functionally, may be involved in modulation of pathogen defense and leaf cell death. Activity seems to be regulated by Ca(2+)-dependent calmodulin binding and seems not to require heterotrimeric G proteins. The chain is MLO-like protein 11 (MLO11) from Arabidopsis thaliana (Mouse-ear cress).